The chain runs to 346 residues: Phenylalanine--tRNA ligase alpha subunit (346 aa).

E261 is a binding site for Mg(2+).

Belongs to the class-II aminoacyl-tRNA synthetase family. Phe-tRNA synthetase alpha subunit type 1 subfamily. In terms of assembly, tetramer of two alpha and two beta subunits. Mg(2+) is required as a cofactor.

Its subcellular location is the cytoplasm. It carries out the reaction tRNA(Phe) + L-phenylalanine + ATP = L-phenylalanyl-tRNA(Phe) + AMP + diphosphate + H(+). In Streptococcus agalactiae serotype Ia (strain ATCC 27591 / A909 / CDC SS700), this protein is Phenylalanine--tRNA ligase alpha subunit.